A 542-amino-acid chain; its full sequence is Probable spastin homolog spas-1 (542 aa).

Residues 29–66 (RAAIEMDELTKQNGTINEKLQTAELYKQARQMLKEANE) adopt a coiled-coil conformation. Positions 131–177 (ATVPGDKKVSKVKQTEKAPHVCSRGDRCGAHQPPPEKKSTPLKPVNQ) are disordered. Over residues 135–169 (GDKKVSKVKQTEKAPHVCSRGDRCGAHQPPPEKKS) the composition is skewed to basic and acidic residues. 309–316 (GPPGNGKT) contributes to the ATP binding site.

Belongs to the AAA ATPase family. Spastin subfamily. As to quaternary structure, homohexamer. The homohexamer is stabilized by ATP-binding. The homohexamer may adopt a ring conformation through which microtubules pass prior to being severed. Interacts with microtubules.

It is found in the cytoplasm. It localises to the cytoskeleton. The protein localises to the perinuclear region. The catalysed reaction is n ATP + n H2O + a microtubule = n ADP + n phosphate + (n+1) alpha/beta tubulin heterodimers.. Its function is as follows. Severs microtubules, probably in an ATP-dependent fashion. The polypeptide is Probable spastin homolog spas-1 (spas-1) (Caenorhabditis briggsae).